Here is a 44-residue protein sequence, read N- to C-terminus: Photosystem I reaction center subunit IX (44 aa).

A helical transmembrane segment spans residues 7–27; the sequence is YLSTVPVLTTLWFGSLAGLLI.

It belongs to the PsaJ family.

It localises to the plastid. Its subcellular location is the chloroplast thylakoid membrane. In terms of biological role, may help in the organization of the PsaE and PsaF subunits. The sequence is that of Photosystem I reaction center subunit IX from Dioscorea elephantipes (Elephant's foot yam).